A 196-amino-acid chain; its full sequence is Large ribosomal subunit protein bL20 (196 aa).

It belongs to the bacterial ribosomal protein bL20 family.

In terms of biological role, binds directly to 23S ribosomal RNA and is necessary for the in vitro assembly process of the 50S ribosomal subunit. It is not involved in the protein synthesizing functions of that subunit. In Oenococcus oeni (strain ATCC BAA-331 / PSU-1), this protein is Large ribosomal subunit protein bL20 (rplT).